The sequence spans 362 residues: Probable protein phosphatase 2C 24 (362 aa).

The region spanning 77-360 (RYGVSSVCGR…DNVSVVVIDL (284 aa)) is the PPM-type phosphatase domain. Asp-117, Gly-118, Asp-295, and Asp-351 together coordinate Mn(2+).

Belongs to the PP2C family. Mg(2+) serves as cofactor. Requires Mn(2+) as cofactor.

The enzyme catalyses O-phospho-L-seryl-[protein] + H2O = L-seryl-[protein] + phosphate. The catalysed reaction is O-phospho-L-threonyl-[protein] + H2O = L-threonyl-[protein] + phosphate. The protein is Probable protein phosphatase 2C 24 of Arabidopsis thaliana (Mouse-ear cress).